A 170-amino-acid chain; its full sequence is MKGINPFYFYIGMALILASIVSILLITKSILLFILLAFGSLVGITLILIYISRKILKIDKGRLKKEVKRIFGNRVYKILRLMLVLGYAGFIYFSGTFYNSAVLFFIFIVAFTISEFYKTYRIRIYEKGILIEGIAFYSWEEIEKTTNKDKNQTILKIKGIPKKIVINEII.

Transmembrane regions (helical) follow at residues Pro-6–Ile-26, Leu-31–Ile-51, and Ile-91–Phe-111.

The protein to M.jannaschii MJ1249.1, MJ0210.1 and MJ0785.1.

It is found in the cell membrane. This is an uncharacterized protein from Methanocaldococcus jannaschii (strain ATCC 43067 / DSM 2661 / JAL-1 / JCM 10045 / NBRC 100440) (Methanococcus jannaschii).